Here is a 102-residue protein sequence, read N- to C-terminus: uncharacterized protein (102 aa).

Residues C10, C16, and C55 each contribute to the [3Fe-4S] cluster site. Residues 66–102 (DAGDDERASADPARSPAEAERHAAKDQRIPGGHDGTV) form a disordered region. The segment covering 82-93 (AEAERHAAKDQR) has biased composition (basic and acidic residues).

[3Fe-4S] cluster is required as a cofactor.

Its function is as follows. Electron transport protein for the cytochrome systems. This is an uncharacterized protein from Sinorhizobium fredii (strain NBRC 101917 / NGR234).